The primary structure comprises 150 residues: Ribosomal RNA large subunit methyltransferase H (150 aa).

S-adenosyl-L-methionine contacts are provided by residues Ile71, Ala100, and 118-123 (LSEMTF).

The protein belongs to the RNA methyltransferase RlmH family. Homodimer.

Its subcellular location is the cytoplasm. It catalyses the reaction pseudouridine(1915) in 23S rRNA + S-adenosyl-L-methionine = N(3)-methylpseudouridine(1915) in 23S rRNA + S-adenosyl-L-homocysteine + H(+). Its function is as follows. Specifically methylates the pseudouridine at position 1915 (m3Psi1915) in 23S rRNA. The protein is Ribosomal RNA large subunit methyltransferase H of Helicobacter acinonychis (strain Sheeba).